Reading from the N-terminus, the 314-residue chain is Adenosine receptor A3 (314 aa).

The Extracellular segment spans residues Met1–Thr14. 2 N-linked (GlcNAc...) asparagine glycosylation sites follow: Asn4 and Asn12. The chain crosses the membrane as a helical span at residues Tyr15–Val37. Residues Lys38 to Phe48 are Cytoplasmic-facing. The chain crosses the membrane as a helical span at residues Tyr49 to Ile72. Residues Ser73–Leu84 are Extracellular-facing. Cys83 and Cys166 are joined by a disulfide. Residues Phe85–Val106 traverse the membrane as a helical segment. Residues Asp107 to Arg126 lie on the Cytoplasmic side of the membrane. The helical transmembrane segment at Ile127–Gly148 threads the bilayer. Topologically, residues Trp149 to Met177 are extracellular. A glycan (N-linked (GlcNAc...) asparagine) is linked at Asn160. The chain crosses the membrane as a helical span at residues Val178–Leu198. Residues Asp199–Ser231 lie on the Cytoplasmic side of the membrane. Residues Leu232–Phe255 form a helical membrane-spanning segment. Topologically, residues His256–Gln261 are extracellular. A helical membrane pass occupies residues Ile262–Tyr284. Residues Lys285 to Glu314 are Cytoplasmic-facing. Cys303 carries S-palmitoyl cysteine lipidation.

This sequence belongs to the G-protein coupled receptor 1 family.

The protein localises to the cell membrane. Receptor for adenosine. The activity of this receptor is mediated by G proteins which inhibits adenylyl cyclase. This chain is Adenosine receptor A3 (ADORA3), found in Canis lupus familiaris (Dog).